The sequence spans 312 residues: Small kinetochore-associated protein (312 aa).

The span at 1-13 (MATHKAEAQETDF) shows a compositional bias: basic and acidic residues. Disordered regions lie at residues 1 to 32 (MATHKAEAQETDFRTTGPPTDLEQCPFPPSSR), 55 to 176 (LKRS…KDKN), and 221 to 242 (KGLNSGQETQESKQEPSTDPTD). Over residues 75–84 (RPTTMASSKT) the composition is skewed to polar residues. Composition is skewed to basic and acidic residues over residues 131–143 (DVTKVTKPRRENG) and 166–176 (QKPEEDLKDKN). Residues 156–312 (IRSSYKPLSK…LEEMEQLLEM (157 aa)) form an interaction with SPAG5 region. Residues 169-210 (EEDLKDKNELLEAVNKQLHQKLTETQGELKDLTQKVELLEKF) are a coiled coil. Residues 246-288 (LLETLKDELKLFNETAKKQMEELQALKVKLKLKEKERIQFLEQ) are a coiled coil.

As to quaternary structure, part of an astrin (SPAG5)-kinastrin (SKAP) complex containing KNSTRN, SPAG5, PLK1, DYNLL1 and SGO2. Interacts with SPAG5. Directly binds to microtubules, although at relatively low affinity. Interacts with CENPE; this interaction greatly favors microtubule-binding. Interacts with DSN1/MIS13; leading to localization to kinetochores. Interacts with MAPRE1/EB1; leading to localization to the microtubule plus ends. Interacts with PRPF19. Interacts with DYNLL1. Interacts with MAP4.

The protein localises to the nucleus. The protein resides in the chromosome. Its subcellular location is the centromere. It localises to the kinetochore. It is found in the cytoplasm. The protein localises to the cytoskeleton. The protein resides in the spindle pole. Its subcellular location is the microtubule organizing center. Its function is as follows. Essential component of the mitotic spindle required for faithful chromosome segregation and progression into anaphase. Promotes the metaphase-to-anaphase transition and is required for chromosome alignment, normal timing of sister chromatid segregation, and maintenance of spindle pole architecture. The astrin (SPAG5)-kinastrin (SKAP) complex promotes stable microtubule-kinetochore attachments. Required for kinetochore oscillations and dynamics of microtubule plus-ends during live cell mitosis, possibly by forming a link between spindle microtubule plus-ends and mitotic chromosomes to achieve faithful cell division. The sequence is that of Small kinetochore-associated protein (Knstrn) from Rattus norvegicus (Rat).